The sequence spans 195 residues: Imidazoleglycerol-phosphate dehydratase (195 aa).

This sequence belongs to the imidazoleglycerol-phosphate dehydratase family.

It is found in the cytoplasm. The catalysed reaction is D-erythro-1-(imidazol-4-yl)glycerol 3-phosphate = 3-(imidazol-4-yl)-2-oxopropyl phosphate + H2O. It participates in amino-acid biosynthesis; L-histidine biosynthesis; L-histidine from 5-phospho-alpha-D-ribose 1-diphosphate: step 6/9. The sequence is that of Imidazoleglycerol-phosphate dehydratase from Shouchella clausii (strain KSM-K16) (Alkalihalobacillus clausii).